The following is a 120-amino-acid chain: V-type proton ATPase subunit F (120 aa).

This sequence belongs to the V-ATPase F subunit family. V-ATPase is a heteromultimeric enzyme composed of a peripheral catalytic V1 complex (components A to H) attached to an integral membrane V0 proton pore complex (components: a, c, c', c'', d, e, f and VOA1).

The protein resides in the vacuole membrane. In terms of biological role, subunit of the V1 complex of vacuolar(H+)-ATPase (V-ATPase), a multisubunit enzyme composed of a peripheral complex (V1) that hydrolyzes ATP and a membrane integral complex (V0) that translocates protons. V-ATPase is responsible for acidifying and maintaining the pH of intracellular compartments. The polypeptide is V-type proton ATPase subunit F (Schizosaccharomyces pombe (strain 972 / ATCC 24843) (Fission yeast)).